Here is a 222-residue protein sequence, read N- to C-terminus: 7-carboxy-7-deazaguanine synthase (222 aa).

Substrate is bound by residues 16 to 18 and Arg31; that span reads LQG. Positions 22 to 222 constitute a Radical SAM core domain; that stretch reads NLGRPAVFVR…IMAWGNARGK (201 aa). Residues Cys35, Cys39, and Cys42 each coordinate [4Fe-4S] cluster. Thr44 provides a ligand contact to Mg(2+). A substrate-binding site is contributed by Thr77. S-adenosyl-L-methionine contacts are provided by residues Gly79 and 126 to 128; that span reads SPK.

It belongs to the radical SAM superfamily. 7-carboxy-7-deazaguanine synthase family. In terms of assembly, homodimer. It depends on [4Fe-4S] cluster as a cofactor. Requires S-adenosyl-L-methionine as cofactor. Mg(2+) is required as a cofactor.

It carries out the reaction 6-carboxy-5,6,7,8-tetrahydropterin + H(+) = 7-carboxy-7-deazaguanine + NH4(+). It participates in purine metabolism; 7-cyano-7-deazaguanine biosynthesis. Its function is as follows. Catalyzes the complex heterocyclic radical-mediated conversion of 6-carboxy-5,6,7,8-tetrahydropterin (CPH4) to 7-carboxy-7-deazaguanine (CDG), a step common to the biosynthetic pathways of all 7-deazapurine-containing compounds. This Pyrobaculum aerophilum (strain ATCC 51768 / DSM 7523 / JCM 9630 / CIP 104966 / NBRC 100827 / IM2) protein is 7-carboxy-7-deazaguanine synthase.